Consider the following 464-residue polypeptide: NADH dehydrogenase [ubiquinone] flavoprotein 1, mitochondrial (464 aa).

The N-terminal 20 residues, 1 to 20 (MLATRRLLGWSLPARVSVRF), are a transit peptide targeting the mitochondrion. K81 carries the N6-acetyllysine; alternate modification. K81 is modified (N6-succinyllysine; alternate). 87-96 (GRGGAGFPTG) is a binding site for NADH. Residue K104 is modified to N6-acetyllysine. 199 to 247 (RGAGAYICGEETALIESIEGKQGKPRLKPPFPADVGVFGCPTTVANVET) serves as a coordination point for FMN. At R257 the chain carries Omega-N-methylarginine. K375 bears the N6-acetyllysine mark. C379, C382, C385, and C425 together coordinate [4Fe-4S] cluster.

It belongs to the complex I 51 kDa subunit family. In terms of assembly, core subunit of respiratory chain NADH dehydrogenase (Complex I) which is composed of 45 different subunits. This is a component of the flavoprotein-sulfur (FP) fragment of the enzyme. Interacts with RAB5IF. The cofactor is FMN. [4Fe-4S] cluster is required as a cofactor.

The protein localises to the mitochondrion inner membrane. It catalyses the reaction a ubiquinone + NADH + 5 H(+)(in) = a ubiquinol + NAD(+) + 4 H(+)(out). In terms of biological role, core subunit of the mitochondrial membrane respiratory chain NADH dehydrogenase (Complex I) which catalyzes electron transfer from NADH through the respiratory chain, using ubiquinone as an electron acceptor. Part of the peripheral arm of the enzyme, where the electrons from NADH are accepted by flavin mononucleotide (FMN) and then passed along a chain of iron-sulfur clusters by electron tunnelling to the final acceptor ubiquinone. Contains FMN, which is the initial electron acceptor as well as one iron-sulfur cluster. This Pan troglodytes (Chimpanzee) protein is NADH dehydrogenase [ubiquinone] flavoprotein 1, mitochondrial.